The primary structure comprises 103 residues: Protein E7 (103 aa).

The tract at residues 1-45 is E7 terminal domain; sequence MIGKEVTVQDFVLKLSEIQPEVLPVDLLCEEELPNEQETEEELDI. The short motif at 27–31 is the LXCXE motif; interaction with host RB1 and TMEM173/STING element; the sequence is LLCEE. Residues 56–94 fold into a zinc finger; it reads CGCSCCQVKLRLFVNATDSGIRTFQELLFRDLQLLCPEC. A Nuclear export signal motif is present at residues 76-84; that stretch reads IRTFQELLF.

Belongs to the papillomaviridae E7 protein family. Homodimer. Homooligomer. Interacts with host RB1; this interaction induces dissociation of RB1-E2F1 complex thereby disrupting RB1 activity. Interacts with host EP300; this interaction represses EP300 transcriptional activity. Interacts with protein E2; this interaction inhibits E7 oncogenic activity. Interacts with host TMEM173/STING; this interaction impairs the ability of TMEM173/STING to sense cytosolic DNA and promote the production of type I interferon (IFN-alpha and IFN-beta). Post-translationally, highly phosphorylated.

It is found in the host cytoplasm. It localises to the host nucleus. Its function is as follows. Plays a role in viral genome replication by driving entry of quiescent cells into the cell cycle. Stimulation of progression from G1 to S phase allows the virus to efficiently use the cellular DNA replicating machinery to achieve viral genome replication. E7 protein has both transforming and trans-activating activities. Induces the disassembly of the E2F1 transcription factor from RB1, with subsequent transcriptional activation of E2F1-regulated S-phase genes. Interferes with host histone deacetylation mediated by HDAC1 and HDAC2, leading to transcription activation. Also plays a role in the inhibition of both antiviral and antiproliferative functions of host interferon alpha. Interaction with host TMEM173/STING impairs the ability of TMEM173/STING to sense cytosolic DNA and promote the production of type I interferon (IFN-alpha and IFN-beta). In Human papillomavirus type 8, this protein is Protein E7.